Here is a 289-residue protein sequence, read N- to C-terminus: Oxaloacetate decarboxylase (289 aa).

Residue S50 participates in substrate binding. D88 contacts Mg(2+). 2 residues coordinate substrate: R159 and H235.

This sequence belongs to the isocitrate lyase/PEP mutase superfamily. Oxaloacetate decarboxylase family. Homotetramer; dimer of dimers. Requires Mg(2+) as cofactor.

The catalysed reaction is oxaloacetate + H(+) = pyruvate + CO2. Catalyzes the decarboxylation of oxaloacetate into pyruvate. Seems to play a role in maintaining cellular concentrations of bicarbonate and pyruvate. This Pseudomonas putida (strain ATCC 47054 / DSM 6125 / CFBP 8728 / NCIMB 11950 / KT2440) protein is Oxaloacetate decarboxylase.